Consider the following 103-residue polypeptide: Cyclotide vibi-I (103 aa).

The N-terminal stretch at 1 to 9 (AAFALPAFA) is a signal peptide. The propeptide occupies 10–69 (SFEKDVITPAALEAVLNRKAPLSNIMMENDAILNVIANVKTVISNPVLEEALLKTNHGVN). Residues 70–99 (GIPCGESCVWIPCLTSTVGCSCKSKVCYRN) constitute a cross-link (cyclopeptide (Gly-Asn)). Intrachain disulfides connect C73/C89, C77/C91, and C82/C96. Positions 100–103 (SLDN) are excised as a propeptide.

This is a cyclic peptide.

Functionally, probably participates in a plant defense mechanism. In Viola biflora (Yellow wood violet), this protein is Cyclotide vibi-I.